A 604-amino-acid polypeptide reads, in one-letter code: Prostaglandin G/H synthase 2 (604 aa).

An N-terminal signal peptide occupies residues 1–17 (MLARALLLCAVLALSHT). One can recognise an EGF-like domain in the interval 18–55 (ANPCCSHPCQNRGVCMSVGFDQYKCDCTRTGFYGENCS). 4 disulfides stabilise this stretch: Cys-21–Cys-32, Cys-22–Cys-145, Cys-26–Cys-42, and Cys-44–Cys-54. N-linked (GlcNAc...) asparagine glycosylation occurs at Asn-53. Arg-106 is a binding site for substrate. Residue Asn-130 is glycosylated (N-linked (GlcNAc...) asparagine). His-193 serves as the catalytic Proton acceptor. Substrate is bound at residue Tyr-341. The active-site For cyclooxygenase activity is the Tyr-371. Heme b is bound at residue His-374. The N-linked (GlcNAc...) asparagine glycan is linked to Asn-396. An S-nitrosocysteine modification is found at Cys-526. Cys-555 and Cys-561 form a disulfide bridge. The residue at position 565 (Ser-565) is an O-acetylserine. N-linked (GlcNAc...) asparagine glycosylation occurs at Asn-580.

This sequence belongs to the prostaglandin G/H synthase family. Homodimer. Heme b serves as cofactor. Post-translationally, S-nitrosylation by NOS2 (iNOS) activates enzyme activity. S-nitrosylation may take place on different Cys residues in addition to Cys-526. Acetylated at Ser-565 by SPHK1. During neuroinflammation, acetylation by SPHK1 promotes neuronal secretion of specialized preresolving mediators (SPMs), especially 15-R-lipoxin A4, which results in an increase of phagocytic microglia.

The protein resides in the microsome membrane. It localises to the endoplasmic reticulum membrane. Its subcellular location is the nucleus inner membrane. The protein localises to the nucleus outer membrane. The catalysed reaction is (5Z,8Z,11Z,14Z)-eicosatetraenoate + AH2 + 2 O2 = prostaglandin H2 + A + H2O. It carries out the reaction (5Z,8Z,11Z,14Z)-eicosatetraenoate + 2 O2 = prostaglandin G2. The enzyme catalyses prostaglandin G2 + AH2 = prostaglandin H2 + A + H2O. It catalyses the reaction (5Z,8Z,11Z,14Z,17Z)-eicosapentaenoate + 2 O2 = prostaglandin G3. The catalysed reaction is prostaglandin G3 + AH2 = prostaglandin H3 + A + H2O. It carries out the reaction (8Z,11Z,14Z)-eicosatrienoate + 2 O2 = prostaglandin G1. The enzyme catalyses prostaglandin G1 + AH2 = prostaglandin H1 + A + H2O. It catalyses the reaction 2-(5Z,8Z,11Z,14Z)-eicosatetraenoyl-sn-glycero-3-phosphoethanolamine + 2 O2 = 2-(prostaglandin G2)-sn-glycero-3-phosphoethanolamine. The catalysed reaction is 2-(prostaglandin G2)-sn-glycero-3-phosphoethanolamine + AH2 = 2-(prostaglandin H2)-sn-glycero-3-phosphoethanolamine + A + H2O. It carries out the reaction 2-(5Z,8Z,11Z,14Z)-eicosatetraenoyl-sn-glycero-3-phosphocholine + 2 O2 = 2-(prostaglandin G2)-sn-glycero-3-phosphocholine. The enzyme catalyses 2-(prostaglandin G2)-sn-glycero-3-phosphocholine + AH2 = 2-(prostaglandin H2)-sn-glycero-3-phosphocholine + A + H2O. It catalyses the reaction (15S)-hydroperoxy-(5Z,8Z,11Z,13E)-eicosatetraenoate + AH2 = (15S)-hydroxy-(5Z,8Z,11Z,13E)-eicosatetraenoate + A + H2O. The catalysed reaction is 2-(5Z,8Z,11Z,14Z)-eicosatetraenoyl-sn-glycero-3-phosphocholine + AH2 + O2 = 2-[(15S)-hydroxy-(5Z,8Z,11Z,13E)-eicosatetraenoyl]-sn-glycero-3-phosphocholine + A + H2O. It carries out the reaction 2-(5Z,8Z,11Z,14Z)-eicosatetraenoyl-sn-glycero-3-phosphocholine + AH2 + O2 = 2-[(15R)-hydroxy-(5Z,8Z,11Z,13E)-eicosatetraenoyl]-sn-glycero-3-phosphocholine + A + H2O. The enzyme catalyses 2-(5Z,8Z,11Z,14Z)-eicosatetraenoyl-sn-glycero-3-phosphocholine + AH2 + O2 = 2-[(11R)-hydroxy-(5Z,8Z,12E,14Z)-eicosatetraenoyl]-sn-glycero-3-phosphocholine + A + H2O. It catalyses the reaction (9Z,12Z)-octadecadienoate + AH2 + O2 = 9-hydroxy-(10E,12Z)-octadecadienoate + A + H2O. The catalysed reaction is (9Z,12Z)-octadecadienoate + AH2 + O2 = 13-hydroxy-(9Z,11E)-octadecadienoate + A + H2O. It carries out the reaction (5Z,8Z,11Z,14Z)-eicosatetraenoate + AH2 + O2 = (15R)-hydroxy-(5Z,8Z,11Z,13E)-eicosatetraenoate + A + H2O. The enzyme catalyses (5Z,8Z,11Z,14Z)-eicosatetraenoate + AH2 + O2 = (11R)-hydroxy-(5Z,8Z,12E,14Z)-eicosatetraenoate + A + H2O. It catalyses the reaction (5Z,8Z,11Z,14Z,17Z)-eicosapentaenoate + AH2 + O2 = (11R)-hydroxy-(5Z,8Z,12E,14Z,17Z)-eicosapentaenoate + A + H2O. The catalysed reaction is (5Z,8Z,11Z,14Z,17Z)-eicosapentaenoate + AH2 + O2 = (18S)-hydroxy-(5Z,8Z,11Z,14Z,16E)-eicosapentaenoate + A + H2O. It carries out the reaction (5Z,8Z,11Z,14Z,17Z)-eicosapentaenoate + AH2 + O2 = (18R)-hydroxy-(5Z,8Z,11Z,14Z,16E)-eicosapentaenoate + A + H2O. The enzyme catalyses (5Z,8Z,11Z,14Z,17Z)-eicosapentaenoate + AH2 + O2 = (15R)-hydroxy-(5Z,8Z,11Z,13E,17Z)-eicosapentaenoate + A + H2O. It catalyses the reaction (5Z,8Z,11Z,14Z,17Z)-eicosapentaenoate + AH2 + O2 = (15S)-hydroxy-(5Z,8Z,11Z,13E,17Z)-eicosapentaenoate + A + H2O. The catalysed reaction is (7Z,10Z,13Z,16Z,19Z)-docosapentaenoate + AH2 + O2 = 13R-hydroxy-(7Z,10Z,14E,16Z,19Z)-docosapentaenoate + A + H2O. It carries out the reaction (4Z,7Z,10Z,13Z,16Z,19Z)-docosahexaenoate + AH2 + O2 = 13-hydroxy-(4Z,7Z,10Z,14E,16Z,19Z)-docosahexaenoate + A + H2O. The enzyme catalyses (5S)-hydroxy-(6E,8Z,11Z,14Z)-eicosatetraenoate + AH2 + O2 = (5S,15R)-dihydroxy-(6E,8Z,11Z,13E)-eicosatetraenoate + A + H2O. It catalyses the reaction (4Z,7Z,10Z,13Z,16Z,19Z)-docosahexaenoate + AH2 + O2 = 17R-hydroxy-(4Z,7Z,10Z,13Z,15E,19Z)-docosahexaenoate + A + H2O. The catalysed reaction is (5S)-hydroxy-(6E,8Z,11Z,14Z)-eicosatetraenoate + AH2 + O2 = (5S,15S)-dihydroxy-(6E,8Z,11Z,13E)-eicosatetraenoate + A + H2O. It carries out the reaction (5S)-hydroxy-(6E,8Z,11Z,14Z)-eicosatetraenoate + AH2 + O2 = (5S,11R)-dihydroxy-(6E,8Z,12E,14Z)-eicosatetraenoate + A + H2O. The enzyme catalyses 2-(5Z,8Z,11Z,14Z-eicosatetraenoyl)-glycerol + 2 O2 = 2-glyceryl-prostaglandin G2. It catalyses the reaction 2-glyceryl-prostaglandin G2 + AH2 = 2-glyceryl-prostaglandin H2 + A + H2O. The catalysed reaction is (5Z,8Z,11Z,14Z)-eicosatetraenoate + O2 = (15R)-hydroperoxy-(5Z,8Z,11Z,13E)-eicosatetraenoate. It carries out the reaction (5Z,8Z,11Z,14Z)-eicosatetraenoate + O2 = 11R-hydroperoxy-(5Z,8Z,12E,14Z)-eicosatetraenoate. The enzyme catalyses (9Z,12Z)-octadecadienoate + AH2 + O2 = (9R)-hydroxy-(10E,12Z)-octadecadienoate + A + H2O. It catalyses the reaction (9Z,12Z)-octadecadienoate + AH2 + O2 = (9S)-hydroxy-(10E,12Z)-octadecadienoate + A + H2O. The catalysed reaction is (9Z,12Z)-octadecadienoate + AH2 + O2 = (13S)-hydroxy-(9Z,11E)-octadecadienoate + A + H2O. It carries out the reaction (9Z,12Z)-octadecadienoate + AH2 + O2 = (13R)-hydroxy-(9Z,11E)-octadecadienoate + A + H2O. The protein operates within lipid metabolism; prostaglandin biosynthesis. The cyclooxygenase activity is inhibited by nonsteroidal anti-inflammatory drugs (NSAIDs) including aspirin, ibuprofen, flurbiprofen, celecoxib, flufenamic, mefenamic and tolfenamic acids as well as by hydroperoxide scavenger erythrocyte glutathione peroxidase GPX1. Aspirin triggers enzyme acetylation turning off its ability to generate pro-inflammatory prostaglandins, but switches on its capacity to produce anti-inflammatory lipid mediators involved in inflammation resolution. Aspirin enhances lipoxygenase-type activity toward production of epimers with R stereochemistry such as 15R-HETE, 18R-HEPE, 15R-HEPE and 17R-HDHA. Atorvastatin, a cholesterol-lowering drug, triggers enzyme S-nitrosylation increasing production of 13-series resolvins (RvTs). Dual cyclooxygenase and peroxidase in the biosynthesis pathway of prostanoids, a class of C20 oxylipins mainly derived from arachidonate ((5Z,8Z,11Z,14Z)-eicosatetraenoate, AA, C20:4(n-6)), with a particular role in the inflammatory response. The cyclooxygenase activity oxygenates AA to the hydroperoxy endoperoxide prostaglandin G2 (PGG2), and the peroxidase activity reduces PGG2 to the hydroxy endoperoxide prostaglandin H2 (PGH2), the precursor of all 2-series prostaglandins and thromboxanes. This complex transformation is initiated by abstraction of hydrogen at carbon 13 (with S-stereochemistry), followed by insertion of molecular O2 to form the endoperoxide bridge between carbon 9 and 11 that defines prostaglandins. The insertion of a second molecule of O2 (bis-oxygenase activity) yields a hydroperoxy group in PGG2 that is then reduced to PGH2 by two electrons. Similarly catalyzes successive cyclooxygenation and peroxidation of dihomo-gamma-linoleate (DGLA, C20:3(n-6)) and eicosapentaenoate (EPA, C20:5(n-3)) to corresponding PGH1 and PGH3, the precursors of 1- and 3-series prostaglandins. In an alternative pathway of prostanoid biosynthesis, converts 2-arachidonoyl lysophopholipids to prostanoid lysophopholipids, which are then hydrolyzed by intracellular phospholipases to release free prostanoids. Metabolizes 2-arachidonoyl glycerol yielding the glyceryl ester of PGH2, a process that can contribute to pain response. Generates lipid mediators from n-3 and n-6 polyunsaturated fatty acids (PUFAs) via a lipoxygenase-type mechanism. Oxygenates PUFAs to hydroperoxy compounds and then reduces them to corresponding alcohols. Plays a role in the generation of resolution phase interaction products (resolvins) during both sterile and infectious inflammation. Metabolizes docosahexaenoate (DHA, C22:6(n-3)) to 17R-HDHA, a precursor of the D-series resolvins (RvDs). As a component of the biosynthetic pathway of E-series resolvins (RvEs), converts eicosapentaenoate (EPA, C20:5(n-3)) primarily to 18S-HEPE that is further metabolized by ALOX5 and LTA4H to generate 18S-RvE1 and 18S-RvE2. In vascular endothelial cells, converts docosapentaenoate (DPA, C22:5(n-3)) to 13R-HDPA, a precursor for 13-series resolvins (RvTs) shown to activate macrophage phagocytosis during bacterial infection. In activated leukocytes, contributes to oxygenation of hydroxyeicosatetraenoates (HETE) to diHETES (5,15-diHETE and 5,11-diHETE). Can also use linoleate (LA, (9Z,12Z)-octadecadienoate, C18:2(n-6)) as substrate and produce hydroxyoctadecadienoates (HODEs) in a regio- and stereospecific manner, being (9R)-HODE ((9R)-hydroxy-(10E,12Z)-octadecadienoate) and (13S)-HODE ((13S)-hydroxy-(9Z,11E)-octadecadienoate) its major products. During neuroinflammation, plays a role in neuronal secretion of specialized preresolving mediators (SPMs) 15R-lipoxin A4 that regulates phagocytic microglia. The polypeptide is Prostaglandin G/H synthase 2 (Homo sapiens (Human)).